Reading from the N-terminus, the 322-residue chain is MELVLLDEETLYEYIFERYVELEANANDLSQDLGILSRNESELEIDIGPHRLVTRKKKAPERDEYTFSIHQNLTSLNSNRDNNNSTTGYVIWTTSTFILKWLLYNDNATIFTRGGVKDEVDITSIFQCQQDDKLRYVLELGTGTSPMFPIVFSNYVDKYVATDQKDILPRLKDNIQENQSECRRRLLKSNTIALDDLKRRTELECQIDIALLDWELFSGSKKSRNDPVLQCGPNFHLTIIAMDVIYNEYLIVPFLTTLESLFVWYTEQRVTVSALIGIQLRTQDVLEMFLEEAIIERQFIVHAVDEKELNKSRFILLHVNLP.

S-adenosyl-L-methionine is bound by residues Trp92, 141–143 (GTG), Asp163, Trp214, and Met242.

The protein belongs to the class I-like SAM-binding methyltransferase superfamily. RKM5 family.

Functionally, S-adenosyl-L-methionine-dependent protein-lysine N-methyltransferase that methylates 60S ribosomal protein L1. This chain is Ribosomal lysine N-methyltransferase 5 (RKM5), found in Kluyveromyces lactis (strain ATCC 8585 / CBS 2359 / DSM 70799 / NBRC 1267 / NRRL Y-1140 / WM37) (Yeast).